The following is a 288-amino-acid chain: MLRRSLENRDAQTRQLQDAVTNVEKHFGELCQIFAAYVRKTARLRDKADLLVNEINVYASTETPHLKQGLKNFADEFAKLQDYRQAEVERLEAKVVEPLKAYGTIVKMKRDDLKATLTARNREAKQLTQLERTRQRNPSDRHVISQAETELQRATMDATRTTRHLEETIDNFEKQKIKDIKTIFSEFITIEMLFHGKALEVYTAAYQNIQKIDEEEDLEVFRHSLYPQDYSSRLDIVRANSKSPLQRSLSAKCVSGTGQVLTCRLRKDHQTEDDDEEDEDLDVTEEEN.

Residues 1–47 (MLRRSLENRDAQTRQLQDAVTNVEKHFGELCQIFAAYVRKTARLRDK) constitute a mitochondrion transit peptide. Residues 10 to 220 (DAQTRQLQDA…KIDEEEDLEV (211 aa)) form a BAR-like region. The stretch at 107-176 (KMKRDDLKAT…ETIDNFEKQK (70 aa)) forms a coiled coil. Residues 266 to 288 (RKDHQTEDDDEEDEDLDVTEEEN) form a disordered region. Residues 271 to 288 (TEDDDEEDEDLDVTEEEN) are compositionally biased toward acidic residues.

This sequence belongs to the CIBAR family. Homodimer (via BAR-like domain). Heterodimer with FAM92B (via BAR-like domains). Interacts (via BAR-like domain) with CBY1; this interaction is required for targeting FAM92A to centriole and cilium basal body. Interacts (via BAR-like domain) with CBY3; both proteins form a ninefold symmetric structure at the flagellar base; are recruited to the annulus in a mutually dependent manner and regulate annulus positionning.

The protein resides in the cytoplasm. Its subcellular location is the cytoskeleton. It localises to the microtubule organizing center. The protein localises to the centrosome. It is found in the centriole. The protein resides in the cilium basal body. Its subcellular location is the cell projection. It localises to the cilium. The protein localises to the nucleus. It is found in the mitochondrion inner membrane. The protein resides in the flagellum. Plays a critical role in regulating mitochondrial ultrastructure and function by maintaining the integrity of mitochondrial morphology, particularly the organization of cristae. Preferentially binds to negatively charged phospholipids like cardiolipin and phosphatidylinositol 4,5-bisphosphate enhancing its interaction with mitochondrial membranes. Induces membrane curvature and tubulation, which are critical for maintaining mitochondrial ultrastructure and the organization of cristae. Plays a crucial role in ciliogenesis. May play a role in limb development through its role in ciliogenesis. Plays a key role in the correct positioning of the annulus, a septin-based ring structure in the sperm flagellum, serving both as a physical barrier and a membrane diffusion barrier that separates the midpiece (MP) from the principal piece (PP). This positioning is essential for proper sperm motility and function. Interacts with CBY3 to form a complex which localizes to the curved membrane region of the flagellar pocket. By doing so, may provide stability and rigidity to the periannular membrane to prevent membrane deformation. This function is crucial for halting annulus migration at the proximal end of the fibrous sheath-containing PP. This is CBY1-interacting BAR domain-containing protein 1 from Bos taurus (Bovine).